Here is a 339-residue protein sequence, read N- to C-terminus: Phenylalanine--tRNA ligase alpha subunit (339 aa).

A Mg(2+)-binding site is contributed by Glu254.

The protein belongs to the class-II aminoacyl-tRNA synthetase family. Phe-tRNA synthetase alpha subunit type 1 subfamily. Tetramer of two alpha and two beta subunits. Mg(2+) is required as a cofactor.

It is found in the cytoplasm. The enzyme catalyses tRNA(Phe) + L-phenylalanine + ATP = L-phenylalanyl-tRNA(Phe) + AMP + diphosphate + H(+). This Acetivibrio thermocellus (strain ATCC 27405 / DSM 1237 / JCM 9322 / NBRC 103400 / NCIMB 10682 / NRRL B-4536 / VPI 7372) (Clostridium thermocellum) protein is Phenylalanine--tRNA ligase alpha subunit.